A 573-amino-acid polypeptide reads, in one-letter code: MLO-like protein 11 (573 aa).

The Extracellular segment spans residues 1–19 (MGEGEENGNEADSNERSLA). The chain crosses the membrane as a helical span at residues 20–40 (LSPTWSVAIVLTVFVVVSLIV). The Cytoplasmic segment spans residues 41 to 69 (ERSIYRLSTWLRKTKRKPMFAALEKMKEE). The chain crosses the membrane as a helical span at residues 70-90 (LMLLGFISLLLTATSSTIANI). Topologically, residues 91 to 163 (CVPSSFYNDR…SYEGLEQLHR (73 aa)) are extracellular. A helical transmembrane segment spans residues 164–184 (FIFIMAVTHVTYSCLTMLLAI). Residues 185–287 (VKIHSWRIWE…IRSMEEEFQR (103 aa)) lie on the Cytoplasmic side of the membrane. 2 helical membrane passes run 288-308 (IVGV…FNIK) and 309-329 (GSNL…LVGA). Residues 330–371 (KLQHVIATLALENAGLTEYPSGVKLRPRDELFWFNKPELLLS) are Cytoplasmic-facing. The helical transmembrane segment at 372-392 (LIHFILFQNSFELASFFWFWW) threads the bilayer. Topologically, residues 393–411 (QFGYSSCFLKNHYLVYFRL) are extracellular. Residues 412 to 432 (LLGFAGQFLCSYSTLPLYALV) traverse the membrane as a helical segment. At 433 to 573 (TQMGTNYKAA…SSSLPSEKRV (141 aa)) the chain is on the cytoplasmic side. Positions 446–467 (QRIRETIRGWGKATRRKRRHGL) are calmodulin-binding. 2 disordered regions span residues 500–532 (EQQR…TSSR) and 554–573 (RSEP…EKRV). Over residues 507-516 (EQGTTELELQ) the composition is skewed to low complexity. Polar residues predominate over residues 561 to 573 (LSRSSSLPSEKRV).

This sequence belongs to the MLO family.

It localises to the membrane. May be involved in modulation of pathogen defense and leaf cell death. Activity seems to be regulated by Ca(2+)-dependent calmodulin binding and seems not to require heterotrimeric G proteins. In Arabidopsis thaliana (Mouse-ear cress), this protein is MLO-like protein 11 (MLO11).